The primary structure comprises 379 residues: DnaJ homolog subfamily B member 14 (379 aa).

Topologically, residues 1–244 (MEGNRDEAEK…GHEREEERGD (244 aa)) are cytoplasmic. Positions 55 to 94 (STAGNSPHCRKPSGSGDQSKPNCTKDSTSGSGEGGKGYTK) are disordered. A compositionally biased stretch (polar residues) spans 69–84 (SGDQSKPNCTKDSTSG). The J domain occupies 108–172 (NYYEVLGVTK…EKRKQYDLTG (65 aa)). The disordered stretch occupies residues 219–241 (SNGRAGYSQQHQHRHSGHEREEE). Residues 245–265 (GGFSVFIQLMPIIVLILVSLL) form a helical membrane-spanning segment. Residues 266 to 379 (SQLMVSNPPY…ERLTSLYKGG (114 aa)) lie on the Lumenal side of the membrane.

It belongs to the DnaJ family. DNAJB12/DNAJB14 subfamily. As to quaternary structure, interacts (via J domain) with HSPA8/Hsc70. Forms a multiprotein complex, at least composed of DNAJB12, DNAJB14, HSPA8/Hsc70 and SGTA; interaction with DNAJB14 and HSPA8/Hsc70 is direct.

It localises to the endoplasmic reticulum membrane. It is found in the nucleus membrane. Functionally, acts as a co-chaperone with HSPA8/Hsc70; required to promote protein folding and trafficking, prevent aggregation of client proteins, and promote unfolded proteins to endoplasmic reticulum-associated degradation (ERAD) pathway. Acts by determining HSPA8/Hsc70's ATPase and polypeptide-binding activities. Can also act independently of HSPA8/Hsc70: together with DNAJB12, acts as a chaperone that promotes maturation of potassium channels KCND2 and KCNH2 by stabilizing nascent channel subunits and assembling them into tetramers. While stabilization of nascent channel proteins is dependent on HSPA8/Hsc70, the process of oligomerization of channel subunits is independent of HSPA8/Hsc70. When overexpressed, forms membranous structures together with DNAJB12 and HSPA8/Hsc70 within the nucleus; the role of these structures, named DJANGOs, is still unclear. Its function is as follows. (Microbial infection) In case of infection by polyomavirus, involved in the virus endoplasmic reticulum membrane penetration and infection. This is DnaJ homolog subfamily B member 14 from Homo sapiens (Human).